A 218-amino-acid polypeptide reads, in one-letter code: 7-cyano-7-deazaguanine synthase (218 aa).

9–19 is a binding site for ATP; sequence YSGGMDSFTVL. The Zn(2+) site is built by Cys185, Cys193, Cys196, and Cys199.

Belongs to the QueC family. Requires Zn(2+) as cofactor.

It carries out the reaction 7-carboxy-7-deazaguanine + NH4(+) + ATP = 7-cyano-7-deazaguanine + ADP + phosphate + H2O + H(+). It participates in purine metabolism; 7-cyano-7-deazaguanine biosynthesis. Functionally, catalyzes the ATP-dependent conversion of 7-carboxy-7-deazaguanine (CDG) to 7-cyano-7-deazaguanine (preQ(0)). This chain is 7-cyano-7-deazaguanine synthase, found in Pseudoalteromonas translucida (strain TAC 125).